The chain runs to 103 residues: Large ribosomal subunit protein P1 (103 aa).

The segment at Pro-66–Asp-103 is disordered. Positions Val-80–Glu-90 are enriched in basic and acidic residues. The segment covering Ser-91–Asp-103 has biased composition (acidic residues).

It belongs to the eukaryotic ribosomal protein P1/P2 family. In terms of assembly, P1 and P2 exist as dimers at the large ribosomal subunit.

In terms of biological role, plays an important role in the elongation step of protein synthesis. In Polyorchis penicillatus (Hydromedusa), this protein is Large ribosomal subunit protein P1.